The chain runs to 230 residues: Ubiquitin carboxyl-terminal hydrolase isozyme L3 (230 aa).

Residues 5 to 229 (RWLPLEANPE…LRFNAIALSA (225 aa)) form the UCH catalytic domain. Positions 8–13 (PLEANP) are interaction with ubiquitin. Residue C95 is the Nucleophile of the active site. S130 bears the Phosphoserine mark. Positions 152-159 (AHEGQTEA) are interaction with ubiquitin. Crossover loop which restricts access of large ubiquitin adducts to the active site. Residue H169 is the Proton donor of the active site. Residues 219 to 224 (ELRFNA) form an interaction with ubiquitin region.

The protein belongs to the peptidase C12 family. In terms of assembly, preferentially binds diubiquitin; the interaction does not hydrolyze diubiquitin but, in vitro, inhibits the hydrolyzing activity on other substrates.

The protein localises to the cytoplasm. The enzyme catalyses Thiol-dependent hydrolysis of ester, thioester, amide, peptide and isopeptide bonds formed by the C-terminal Gly of ubiquitin (a 76-residue protein attached to proteins as an intracellular targeting signal).. With respect to regulation, inhibited by monoubiquitin and diubiquitin. Functionally, deubiquitinating enzyme (DUB) that controls levels of cellular ubiquitin through processing of ubiquitin precursors and ubiquitinated proteins. Thiol protease that recognizes and hydrolyzes a peptide bond at the C-terminal glycine of either ubiquitin or NEDD8. Has a 10-fold preference for Arg and Lys at position P3, and exhibits a preference towards 'Lys-48'-linked ubiquitin chains. Deubiquitinates ENAC in apical compartments, thereby regulating apical membrane recycling. Indirectly increases the phosphorylation of IGFIR, AKT and FOXO1 and promotes insulin-signaling and insulin-induced adipogenesis. Required for stress-response retinal, skeletal muscle and germ cell maintenance. May be involved in working memory. Can hydrolyze UBB(+1), a mutated form of ubiquitin which is not effectively degraded by the proteasome. The chain is Ubiquitin carboxyl-terminal hydrolase isozyme L3 (UCHL3) from Sus scrofa (Pig).